Reading from the N-terminus, the 111-residue chain is Large ribosomal subunit protein uL24 (111 aa).

This sequence belongs to the universal ribosomal protein uL24 family. Part of the 50S ribosomal subunit.

In terms of biological role, one of two assembly initiator proteins, it binds directly to the 5'-end of the 23S rRNA, where it nucleates assembly of the 50S subunit. One of the proteins that surrounds the polypeptide exit tunnel on the outside of the subunit. The chain is Large ribosomal subunit protein uL24 from Streptococcus pneumoniae (strain Hungary19A-6).